We begin with the raw amino-acid sequence, 185 residues long: Ribosome maturation factor RimM (185 aa).

The PRC barrel domain occupies 108-183 (PGEFHVTDLL…RLEIKTIPGL (76 aa)).

Belongs to the RimM family. As to quaternary structure, binds ribosomal protein uS19.

It localises to the cytoplasm. Its function is as follows. An accessory protein needed during the final step in the assembly of 30S ribosomal subunit, possibly for assembly of the head region. Essential for efficient processing of 16S rRNA. May be needed both before and after RbfA during the maturation of 16S rRNA. It has affinity for free ribosomal 30S subunits but not for 70S ribosomes. This Synechocystis sp. (strain ATCC 27184 / PCC 6803 / Kazusa) protein is Ribosome maturation factor RimM.